Reading from the N-terminus, the 262-residue chain is MAKGGKGPKGKKITLNVAKNCIKITFDGRKRLDLSKMGITTFPKCILRLSDIDELDLSRNMIRKIPDSIAKFQNLRWLDLHSNYIDKLPESIGQMTSLLFLNVSNNRLTTNGLPVELNQLKNIRTVNLGLNHLDSVPTTLGALKELHEVGLHDNLLTTIPASIAKLPKLKKLNIKRNPFPNADESEMFVDSIKRLENLYLVEEKDMCSSCLQRCQQARDKLNKIKSMAPSAPRKALFSNLVSPNSTAKDAQEEWRLRSPSTF.

7 LRR repeats span residues 28 to 49, 51 to 72, 74 to 95, 97 to 118, 122 to 144, 145 to 167, and 168 to 189; these read GRKRLDLSKMGITTFPKCILRL, DIDELDLSRNMIRKIPDSIAKF, NLRWLDLHSNYIDKLPESIGQM, SLLFLNVSNNRLTTNGLPVELN, NIRTVNLGLNHLDSVPTTLGALK, ELHEVGLHDNLLTTIPASIAKLP, and KLKKLNIKRNPFPNADESEMFV.

As to expression, exclusively expressed in spermatocytes and roud spermatids within seminiferous tubules during spermatogenesis.

Its subcellular location is the cytoplasm. In terms of biological role, may be involved in the regulation of spermatogenesis and sperm maturation. The protein is Leucine-rich repeat-containing protein 18 (Lrrc18) of Mus musculus (Mouse).